The following is a 264-amino-acid chain: MSDILQKICAVKREEVTAALAAKPLAIVRAEAEAQPAARDFVGAIRGRITAGRPAVIAEIKKASPSKGVIREDFRPADIAPSYEAAGAACLSVLTDKPFFQGAPEYLQAARAACALPALRKDFLVDAYQVYEARAMGADAILLIAACLSLAEMQDMEAIAHGLGMGVLVEVHDGAELEQALKLRTPLVGINNRNLRTFEVSLQTTLGLLPRLAAEADRIVVTESGILAPADVALMRENGVNAFLVGEAFMRVPDPGAGLRALFG.

It belongs to the TrpC family.

It catalyses the reaction 1-(2-carboxyphenylamino)-1-deoxy-D-ribulose 5-phosphate + H(+) = (1S,2R)-1-C-(indol-3-yl)glycerol 3-phosphate + CO2 + H2O. It functions in the pathway amino-acid biosynthesis; L-tryptophan biosynthesis; L-tryptophan from chorismate: step 4/5. This Azoarcus sp. (strain BH72) protein is Indole-3-glycerol phosphate synthase.